The sequence spans 1740 residues: SH3 and multiple ankyrin repeat domains protein 3 (1740 aa).

An intramolecular interaction with the ANK repeats region spans residues 1-75 (MDGPGASAVV…KFLDEERLLQ (75 aa)). Residue tyrosine 122 is modified to Phosphotyrosine. 6 ANK repeats span residues 148–181 (SGEC…FRTR), 182–214 (DGLT…YKDS), 215–245 (RGLT…QLGT), 249–278 (NGWQ…NMGA), 282–311 (SGNT…NKDV), and 315–345 (NSQT…DVVP). Positions 354–466 (KRRRLAGPSG…PPPRGPKRKL (113 aa)) are disordered. Phosphoserine is present on residues serine 373, serine 375, serine 387, and serine 394. Positions 404–415 (LQEEKDRDRDGE) are enriched in basic and acidic residues. Positions 444–460 (APGPGPASPAPPAPPPR) are enriched in pro residues. Positions 470 to 529 (VPGRKFIAVKAHSPQGEGEIPLHRGEAVKVLSIGEGGFWEGTVKGRTGWFPADCVEEVQM) constitute an SH3 domain. Serine 482 is modified (phosphoserine). Tyrosine 555 carries the post-translational modification Phosphotyrosine. A PDZ domain is found at 570–664 (VAILQKRDHE…RLVMKVVSVT (95 aa)). The interval 664 to 687 (TRKPEEDSARRRAPPPPKRAPSTT) is disordered. A required for interaction with ABI1 region spans residues 677 to 684 (PPPPKRAP). Phosphoserine occurs at positions 694, 781, 790, and 801. Disordered stretches follow at residues 759-855 (RQGL…RSSF), 868-1053 (AGLY…QPSR), 1115-1199 (AARE…MILS), 1211-1463 (LIVV…GPAR), and 1476-1518 (GDPV…EPVG). Over residues 812–845 (IPPPPQTAPPPPPAPYYFDSGPPPTFSPPPPPPG) the composition is skewed to pro residues. A phosphoserine mark is found at serine 891 and serine 898. Residue threonine 913 is modified to Phosphothreonine. Tyrosine 931 is modified (phosphotyrosine). Arginine 966 carries the post-translational modification Asymmetric dimethylarginine. A compositionally biased stretch (basic and acidic residues) spans 1017–1027 (VKERRLEERRR). Positions 1123-1132 (SQTPSRSPTP) are enriched in polar residues. Phosphothreonine is present on threonine 1131. Serine 1135, serine 1160, serine 1164, and serine 1167 each carry phosphoserine. Residues 1175–1195 (ARREAEKPTREERKSPEDKKS) are compositionally biased toward basic and acidic residues. Threonine 1235 carries the post-translational modification Phosphothreonine. 2 stretches are compositionally biased toward pro residues: residues 1252-1262 (MPSPRAQPPGS) and 1322-1334 (TPPP…PTTV). The residue at position 1254 (serine 1254) is a Phosphoserine. Over residues 1335–1344 (PSPASGKPSS) the composition is skewed to low complexity. Over residues 1361–1371 (ADTRSSSDPHL) the composition is skewed to basic and acidic residues. Residues 1372–1393 (ETTSTISTVSSMSTLSSESGEL) are compositionally biased toward low complexity. An SH3-binding motif is present at residues 1411–1417 (PPVPPKP). Serine 1421 bears the Phosphoserine mark. Positions 1495-1515 (ISELSSRLQQLNKDTRSLGEE) form a coiled coil. Residues 1496–1506 (SELSSRLQQLN) show a composition bias toward polar residues. 4 positions are modified to phosphoserine: serine 1511, serine 1522, serine 1530, and serine 1549. Disordered regions lie at residues 1556-1594 (ISAQ…PASL) and 1637-1673 (VRSV…QQKP). A compositionally biased stretch (low complexity) spans 1637–1647 (VRSVSARSRSP). 3 positions are modified to phosphoserine: serine 1644, serine 1646, and serine 1648. The span at 1648 to 1658 (SPSPLPSPSPG) shows a compositional bias: pro residues. The segment covering 1659-1668 (SGPSAGPRRP) has biased composition (low complexity). The SAM domain occupies 1677-1740 (WSKFDVGDWL…ERALRQLDGS (64 aa)).

Belongs to the SHANK family. May homomultimerize via its SAM domain. Interacts with BAIAP2, DBNL and SLC17A7/VGLUT1. Interacts with DLGAP1/GKAP, GRM1/MGLUR1, GRM5/MGLUR5 and LZTS3 C-termini via its PDZ domain. Interacts with ABI1, HOMER1, HOMER2, HOMER3 and CTTN/cortactin SH3 domain. Is part of a complex with DLG4/PSD-95 and DLGAP1/GKAP. Interacts (via PDZ domain) with the GRIA1 subunit of the AMPA receptor (via PDZ-binding motif). Interacts with WASF1 and CYFIP2; the interactions mediate the association of SHANK3 with the WAVE1 complex. Interacts with ARPC2; the interaction probably mediates the association of SHANK3 with the Arp2/3 complex. Interacts (via ANK repeats) with SHARPIN and SPTAN1. Interacts (via PDZ domain) with ARHGAP44 (probably via PDZ-binding motif); the interaction takes place in dendritic spines and promotes GRIA1 exocytosis. Interacts with CAMK2A. Interacts with DIP2A. Interacts with ADGRL3. As to expression, widely expressed in brain (at protein level).

Its subcellular location is the cytoplasm. It is found in the postsynaptic density. The protein resides in the cell projection. It localises to the dendritic spine. In terms of biological role, major scaffold postsynaptic density protein which interacts with multiple proteins and complexes to orchestrate the dendritic spine and synapse formation, maturation and maintenance. Interconnects receptors of the postsynaptic membrane including NMDA-type and metabotropic glutamate receptors via complexes with GKAP/PSD-95 and HOMER, respectively, and the actin-based cytoskeleton. Plays a role in the structural and functional organization of the dendritic spine and synaptic junction through the interaction with Arp2/3 and WAVE1 complex as well as the promotion of the F-actin clusters. By way of this control of actin dynamics, participates in the regulation of developing neurons growth cone motility and the NMDA receptor-signaling. Also modulates GRIA1 exocytosis and GRM5/MGLUR5 expression and signaling to control the AMPA and metabotropic glutamate receptor-mediated synaptic transmission and plasticity. May be required at an early stage of synapse formation and be inhibited by IGF1 to promote synapse maturation. This Rattus norvegicus (Rat) protein is SH3 and multiple ankyrin repeat domains protein 3 (Shank3).